The sequence spans 95 residues: Large ribosomal subunit protein bL25 (95 aa).

It belongs to the bacterial ribosomal protein bL25 family. Part of the 50S ribosomal subunit; part of the 5S rRNA/L5/L18/L25 subcomplex. Contacts the 5S rRNA. Binds to the 5S rRNA independently of L5 and L18.

Its function is as follows. This is one of the proteins that binds to the 5S RNA in the ribosome where it forms part of the central protuberance. In Shewanella putrefaciens (strain CN-32 / ATCC BAA-453), this protein is Large ribosomal subunit protein bL25.